Here is a 362-residue protein sequence, read N- to C-terminus: Phosphoserine aminotransferase (362 aa).

Arg42 serves as a coordination point for L-glutamate. Pyridoxal 5'-phosphate is bound by residues 76–77, Trp102, Thr154, Asp174, and Gln197; that span reads AR. Lys198 carries the post-translational modification N6-(pyridoxal phosphate)lysine. Pyridoxal 5'-phosphate is bound at residue 239 to 240; that stretch reads NT.

Belongs to the class-V pyridoxal-phosphate-dependent aminotransferase family. SerC subfamily. In terms of assembly, homodimer. Pyridoxal 5'-phosphate serves as cofactor.

The protein localises to the cytoplasm. It catalyses the reaction O-phospho-L-serine + 2-oxoglutarate = 3-phosphooxypyruvate + L-glutamate. The enzyme catalyses 4-(phosphooxy)-L-threonine + 2-oxoglutarate = (R)-3-hydroxy-2-oxo-4-phosphooxybutanoate + L-glutamate. Its pathway is amino-acid biosynthesis; L-serine biosynthesis; L-serine from 3-phospho-D-glycerate: step 2/3. The protein operates within cofactor biosynthesis; pyridoxine 5'-phosphate biosynthesis; pyridoxine 5'-phosphate from D-erythrose 4-phosphate: step 3/5. Functionally, catalyzes the reversible conversion of 3-phosphohydroxypyruvate to phosphoserine and of 3-hydroxy-2-oxo-4-phosphonooxybutanoate to phosphohydroxythreonine. In Buchnera aphidicola subsp. Cinara cedri (strain Cc), this protein is Phosphoserine aminotransferase.